A 113-amino-acid chain; its full sequence is Signal peptidase complex subunit 1 (113 aa).

The Cytoplasmic segment spans residues 1–32 (MDGMIAMLPAPLQQLSSHIDFQGQKVAERTYQ). A helical membrane pass occupies residues 33–53 (VILTLAGIIGFFVGYSTQQLS). At 54-57 (YAMY) the chain is on the lumenal side. The chain crosses the membrane as a helical span at residues 58–78 (TVMGAAVFTALIILPPWPFLF). Residues 79–113 (RKNPIVWQTPIEEQEASSSSDNEKKDKKKETKKTK) are Cytoplasmic-facing. Positions 89–113 (IEEQEASSSSDNEKKDKKKETKKTK) are disordered.

Belongs to the SPCS1 family. As to quaternary structure, component of the signal peptidase complex (SPC) composed of a catalytic subunit sec-11 and three accessory subunits spcs-1, spcs-2 and spcs-3. The complex induces a local thinning of the ER membrane which is used to measure the length of the signal peptide (SP) h-region of protein substrates. This ensures the selectivity of the complex towards h-regions shorter than 18-20 amino acids.

It localises to the endoplasmic reticulum membrane. Its function is as follows. Component of the signal peptidase complex (SPC) which catalyzes the cleavage of N-terminal signal sequences from nascent proteins as they are translocated into the lumen of the endoplasmic reticulum. Dispensable for SPC enzymatic activity. The chain is Signal peptidase complex subunit 1 from Caenorhabditis briggsae.